A 377-amino-acid polypeptide reads, in one-letter code: Aspartate aminotransferase (377 aa).

Residues glycine 37, tryptophan 123, and asparagine 173 each contribute to the L-aspartate site. Lysine 234 is modified (N6-(pyridoxal phosphate)lysine). Position 353 (arginine 353) interacts with L-aspartate.

This sequence belongs to the class-I pyridoxal-phosphate-dependent aminotransferase family. As to quaternary structure, homodimer. Pyridoxal 5'-phosphate is required as a cofactor.

The protein localises to the cytoplasm. The enzyme catalyses L-aspartate + 2-oxoglutarate = oxaloacetate + L-glutamate. The sequence is that of Aspartate aminotransferase (aspC) from Thermotoga maritima (strain ATCC 43589 / DSM 3109 / JCM 10099 / NBRC 100826 / MSB8).